We begin with the raw amino-acid sequence, 234 residues long: Leucyl/phenylalanyl-tRNA--protein transferase (234 aa).

Belongs to the L/F-transferase family.

It is found in the cytoplasm. It catalyses the reaction N-terminal L-lysyl-[protein] + L-leucyl-tRNA(Leu) = N-terminal L-leucyl-L-lysyl-[protein] + tRNA(Leu) + H(+). It carries out the reaction N-terminal L-arginyl-[protein] + L-leucyl-tRNA(Leu) = N-terminal L-leucyl-L-arginyl-[protein] + tRNA(Leu) + H(+). The catalysed reaction is L-phenylalanyl-tRNA(Phe) + an N-terminal L-alpha-aminoacyl-[protein] = an N-terminal L-phenylalanyl-L-alpha-aminoacyl-[protein] + tRNA(Phe). Functions in the N-end rule pathway of protein degradation where it conjugates Leu, Phe and, less efficiently, Met from aminoacyl-tRNAs to the N-termini of proteins containing an N-terminal arginine or lysine. This chain is Leucyl/phenylalanyl-tRNA--protein transferase, found in Tolumonas auensis (strain DSM 9187 / NBRC 110442 / TA 4).